The following is a 163-amino-acid chain: Putative 4-hydroxy-4-methyl-2-oxoglutarate aldolase (163 aa).

Substrate-binding positions include 79-82 (GDQL) and Arg-101. Position 102 (Asp-102) interacts with a divalent metal cation.

Belongs to the class II aldolase/RraA-like family. As to quaternary structure, homotrimer. A divalent metal cation is required as a cofactor.

It carries out the reaction 4-hydroxy-4-methyl-2-oxoglutarate = 2 pyruvate. The catalysed reaction is oxaloacetate + H(+) = pyruvate + CO2. Functionally, catalyzes the aldol cleavage of 4-hydroxy-4-methyl-2-oxoglutarate (HMG) into 2 molecules of pyruvate. Also contains a secondary oxaloacetate (OAA) decarboxylase activity due to the common pyruvate enolate transition state formed following C-C bond cleavage in the retro-aldol and decarboxylation reactions. In Dechloromonas aromatica (strain RCB), this protein is Putative 4-hydroxy-4-methyl-2-oxoglutarate aldolase.